Consider the following 810-residue polypeptide: Transducer protein CosT (810 aa).

Topologically, residues Met-1–Lys-38 are cytoplasmic. Residues Phe-39–Ala-59 form a helical membrane-spanning segment. Residues Asp-60–Thr-323 lie on the Extracellular side of the membrane. Residues Gly-324–Gly-344 traverse the membrane as a helical segment. The 53-residue stretch at Arg-345 to Asp-397 folds into the HAMP 1 domain. The Cytoplasmic portion of the chain corresponds to Arg-345–Asp-810. The segment at Arg-403–Ala-427 is disordered. Basic and acidic residues predominate over residues Glu-414–Ala-427. One can recognise an HAMP 2 domain in the interval Ala-439–Ile-493. The Methyl-accepting transducer domain maps to Gly-512 to Ala-748. Residues Glu-556 and Glu-739 each carry the glutamate methyl ester (Glu) modification. The disordered stretch occupies residues Ser-751–Gly-784. The segment covering Ala-755–Glu-774 has biased composition (low complexity). Positions Ile-775–Gly-784 are enriched in polar residues.

The protein belongs to the methyl-accepting chemotaxis (MCP) protein family. Post-translationally, methylated by CheR.

It localises to the cell membrane. In terms of biological role, mediates chemotaxis towards compatible osmolytes. Probably transduces the signal from the substrate-binding protein CosB to the histidine kinase CheA. This is Transducer protein CosT (cosT) from Halobacterium salinarum (strain ATCC 700922 / JCM 11081 / NRC-1) (Halobacterium halobium).